Reading from the N-terminus, the 97-residue chain is UPF0235 protein cbdbA1230 (97 aa).

It belongs to the UPF0235 family.

In Dehalococcoides mccartyi (strain CBDB1), this protein is UPF0235 protein cbdbA1230.